The sequence spans 583 residues: Eukaryotic translation initiation factor 3 subunit D (583 aa).

The segment at 116 to 150 is disordered; the sequence is GRAQRGAGQRGGRAGFQRVGAGRGQGDRFYDNRGG. A compositionally biased stretch (basic and acidic residues) spans 140–149; that stretch reads QGDRFYDNRG. An RNA gate region spans residues 298–312; it reads SLDLVTVNENAIDAP. The disordered stretch occupies residues 561-583; the sequence is NTFEEDEEAAAEEEEQKAEEDEE. The span at 563–583 shows a compositional bias: acidic residues; that stretch reads FEEDEEAAAEEEEQKAEEDEE.

Belongs to the eIF-3 subunit D family. As to quaternary structure, component of the eukaryotic translation initiation factor 3 (eIF-3) complex.

Its subcellular location is the cytoplasm. Its function is as follows. mRNA cap-binding component of the eukaryotic translation initiation factor 3 (eIF-3) complex, which is involved in protein synthesis of a specialized repertoire of mRNAs and, together with other initiation factors, stimulates binding of mRNA and methionyl-tRNAi to the 40S ribosome. The eIF-3 complex specifically targets and initiates translation of a subset of mRNAs involved in cell proliferation. In the eIF-3 complex, eif3d specifically recognizes and binds the 7-methylguanosine cap of a subset of mRNAs. The protein is Eukaryotic translation initiation factor 3 subunit D of Aspergillus oryzae (strain ATCC 42149 / RIB 40) (Yellow koji mold).